A 165-amino-acid polypeptide reads, in one-letter code: ER membrane protein complex subunit 5 (165 aa).

The Cytoplasmic segment spans residues 1-3 (MAP). A helical transmembrane segment spans residues 4 to 22 (SLWKGLVGIGLFALAHAAF). Residues 23-77 (SAAQHYFPSSGIKWKRKCEFLQSSSFQDKIFRSMYYVYDRSYMRLTEKEDESLPI) lie on the Lumenal side of the membrane. A helical membrane pass occupies residues 78–97 (DIVLQTLLAFAVTCYGIVHI). Residues 98–165 (AGEFKDMDAT…KLRKLESLRR (68 aa)) are Cytoplasmic-facing. Serine 154 bears the Phosphoserine mark.

Belongs to the membrane magnesium transporter (TC 1.A.67) family. In terms of assembly, component of the ER membrane protein complex (EMC).

The protein localises to the endoplasmic reticulum membrane. It localises to the golgi apparatus membrane. The protein resides in the early endosome membrane. In terms of biological role, part of the endoplasmic reticulum membrane protein complex (EMC) that enables the energy-independent insertion into endoplasmic reticulum membranes of newly synthesized membrane proteins. Preferentially accommodates proteins with transmembrane domains that are weakly hydrophobic or contain destabilizing features such as charged and aromatic residues. Involved in the cotranslational insertion of multi-pass membrane proteins in which stop-transfer membrane-anchor sequences become ER membrane spanning helices. It is also required for the post-translational insertion of tail-anchored/TA proteins in endoplasmic reticulum membranes. By mediating the proper cotranslational insertion of N-terminal transmembrane domains in an N-exo topology, with translocated N-terminus in the lumen of the ER, controls the topology of multi-pass membrane proteins like the G protein-coupled receptors. By regulating the insertion of various proteins in membranes, it is indirectly involved in many cellular processes. May be involved in Mg(2+) transport. This chain is ER membrane protein complex subunit 5, found in Bos taurus (Bovine).